A 185-amino-acid polypeptide reads, in one-letter code: Ribosome-recycling factor (185 aa).

Belongs to the RRF family.

It is found in the cytoplasm. Its function is as follows. Responsible for the release of ribosomes from messenger RNA at the termination of protein biosynthesis. May increase the efficiency of translation by recycling ribosomes from one round of translation to another. This is Ribosome-recycling factor from Arthrobacter sp. (strain FB24).